Here is a 293-residue protein sequence, read N- to C-terminus: Pyridoxal 5'-phosphate synthase subunit PdxS (293 aa).

Residue D23 coordinates D-ribose 5-phosphate. K80 serves as the catalytic Schiff-base intermediate with D-ribose 5-phosphate. G152 contributes to the D-ribose 5-phosphate binding site. R164 is a D-glyceraldehyde 3-phosphate binding site. Residues G213 and 234 to 235 (GS) each bind D-ribose 5-phosphate.

The protein belongs to the PdxS/SNZ family. In terms of assembly, in the presence of PdxT, forms a dodecamer of heterodimers.

The catalysed reaction is aldehydo-D-ribose 5-phosphate + D-glyceraldehyde 3-phosphate + L-glutamine = pyridoxal 5'-phosphate + L-glutamate + phosphate + 3 H2O + H(+). It participates in cofactor biosynthesis; pyridoxal 5'-phosphate biosynthesis. Catalyzes the formation of pyridoxal 5'-phosphate from ribose 5-phosphate (RBP), glyceraldehyde 3-phosphate (G3P) and ammonia. The ammonia is provided by the PdxT subunit. Can also use ribulose 5-phosphate and dihydroxyacetone phosphate as substrates, resulting from enzyme-catalyzed isomerization of RBP and G3P, respectively. In Syntrophus aciditrophicus (strain SB), this protein is Pyridoxal 5'-phosphate synthase subunit PdxS.